A 251-amino-acid polypeptide reads, in one-letter code: 3-deoxy-manno-octulosonate cytidylyltransferase (251 aa).

It belongs to the KdsB family.

The protein localises to the cytoplasm. The enzyme catalyses 3-deoxy-alpha-D-manno-oct-2-ulosonate + CTP = CMP-3-deoxy-beta-D-manno-octulosonate + diphosphate. It functions in the pathway nucleotide-sugar biosynthesis; CMP-3-deoxy-D-manno-octulosonate biosynthesis; CMP-3-deoxy-D-manno-octulosonate from 3-deoxy-D-manno-octulosonate and CTP: step 1/1. The protein operates within bacterial outer membrane biogenesis; lipopolysaccharide biosynthesis. Its function is as follows. Activates KDO (a required 8-carbon sugar) for incorporation into bacterial lipopolysaccharide in Gram-negative bacteria. The chain is 3-deoxy-manno-octulosonate cytidylyltransferase from Alcanivorax borkumensis (strain ATCC 700651 / DSM 11573 / NCIMB 13689 / SK2).